A 619-amino-acid polypeptide reads, in one-letter code: Probable serine/threonine-protein kinase WNK8 (619 aa).

Residues 1–14 show a composition bias toward basic and acidic residues; the sequence is MSGARRCGDRRSER. The tract at residues 1-30 is disordered; it reads MSGARRCGDRRSERSSVVGDNRNGYVETDP. Positions 35–291 constitute a Protein kinase domain; that stretch reads GRLSEVLGKG…AEELLLDPFL (257 aa). Residues 115–118 and Lys-163 contribute to the ATP site; that span reads TELF. Residue Asp-180 is the Proton acceptor of the active site. 4 disordered regions span residues 293 to 335, 419 to 464, 508 to 555, and 585 to 619; these read PPQN…AKTT, YADD…PGPH, CSAS…SMVD, and GFRD…HYMF. Residues 419-428 are compositionally biased toward acidic residues; that stretch reads YADDDDDDDV. A compositionally biased stretch (low complexity) spans 439–448; it reads SSSPTSSQGS. Residues 602–619 are compositionally biased toward basic residues; the sequence is QHRRRSSSKVDHKHHYMF.

Belongs to the protein kinase superfamily. Ser/Thr protein kinase family. WNK subfamily.

It carries out the reaction L-seryl-[protein] + ATP = O-phospho-L-seryl-[protein] + ADP + H(+). The enzyme catalyses L-threonyl-[protein] + ATP = O-phospho-L-threonyl-[protein] + ADP + H(+). In Oryza sativa subsp. japonica (Rice), this protein is Probable serine/threonine-protein kinase WNK8 (WNK8).